Here is a 165-residue protein sequence, read N- to C-terminus: Pro-MCH (165 aa).

The first 21 residues, 1-21 (MAKMNLSSYILILTFSLFSQG), serve as a signal peptide directing secretion. At Ile143 the chain carries Isoleucine amide. Cys153 and Cys162 form a disulfide bridge.

It belongs to the melanin-concentrating hormone family. Differentially processed in the brain and in peripheral organs producing two neuropeptides; NEI and MCH. A third peptide, NGE, may also be produced. Preferential processing in neurons by prohormone convertase 2 (PC2) generates NEI. MCH is generated in neurons of the lateral hypothalmic area by several prohormone convertases including PC1/3, PC2 and PC5/6. Predominantly expressed in lateral hypothalamus, also detected in pallidum, neocortex and cerebellum. Also found in thymus, brown adipose tissue, duodenum and testis (spermatogonia, early spermatocytes and Sertoli cells). No expression in peripheral blood. In brain exclusively mature MCH and NEI peptides are present. In peripheral tissues a large product, encompassing the NEI and MCH domains of the precursor, is found predominantly.

It is found in the secreted. Functionally, MCH may act as a neurotransmitter or neuromodulator in a broad array of neuronal functions directed toward the regulation of goal-directed behavior, such as food intake, and general arousal. May also have a role in spermatocyte differentiation. The sequence is that of Pro-MCH (PMCH) from Homo sapiens (Human).